We begin with the raw amino-acid sequence, 511 residues long: ATP synthase subunit alpha (511 aa).

An ATP-binding site is contributed by 169–176 (GDRQTGKT).

This sequence belongs to the ATPase alpha/beta chains family. F-type ATPases have 2 components, CF(1) - the catalytic core - and CF(0) - the membrane proton channel. CF(1) has five subunits: alpha(3), beta(3), gamma(1), delta(1), epsilon(1). CF(0) has three main subunits: a(1), b(2) and c(9-12). The alpha and beta chains form an alternating ring which encloses part of the gamma chain. CF(1) is attached to CF(0) by a central stalk formed by the gamma and epsilon chains, while a peripheral stalk is formed by the delta and b chains.

It is found in the cell inner membrane. It carries out the reaction ATP + H2O + 4 H(+)(in) = ADP + phosphate + 5 H(+)(out). Produces ATP from ADP in the presence of a proton gradient across the membrane. The alpha chain is a regulatory subunit. In Bartonella henselae (strain ATCC 49882 / DSM 28221 / CCUG 30454 / Houston 1) (Rochalimaea henselae), this protein is ATP synthase subunit alpha.